Reading from the N-terminus, the 229-residue chain is Adapter protein MecA (229 aa).

It belongs to the MecA family. In terms of assembly, homodimer.

Functionally, enables the recognition and targeting of unfolded and aggregated proteins to the ClpC protease or to other proteins involved in proteolysis. The protein is Adapter protein MecA of Latilactobacillus sakei subsp. sakei (strain 23K) (Lactobacillus sakei subsp. sakei).